The chain runs to 87 residues: Acyl carrier protein 3 (87 aa).

The Carrier domain occupies 1–79 (MSNPTVLDQI…DLVTYIEAAL (79 aa)). S39 bears the O-(pantetheine 4'-phosphoryl)serine mark.

It belongs to the acyl carrier protein (ACP) family. Post-translationally, 4'-phosphopantetheine is transferred from CoA to a specific serine of apo-ACP by AcpS. This modification is essential for activity because fatty acids are bound in thioester linkage to the sulfhydryl of the prosthetic group.

The protein resides in the cytoplasm. It functions in the pathway lipid metabolism; fatty acid biosynthesis. In terms of biological role, carrier of the growing fatty acid chain in fatty acid biosynthesis. This Ralstonia nicotianae (strain ATCC BAA-1114 / GMI1000) (Ralstonia solanacearum) protein is Acyl carrier protein 3.